The chain runs to 285 residues: Probable endonuclease 4 (285 aa).

His-69, His-109, Glu-145, Asp-179, His-182, His-216, Asp-229, His-231, and Glu-261 together coordinate Zn(2+).

The protein belongs to the AP endonuclease 2 family. Zn(2+) serves as cofactor.

It carries out the reaction Endonucleolytic cleavage to 5'-phosphooligonucleotide end-products.. Functionally, endonuclease IV plays a role in DNA repair. It cleaves phosphodiester bonds at apurinic or apyrimidinic (AP) sites, generating a 3'-hydroxyl group and a 5'-terminal sugar phosphate. This is Probable endonuclease 4 from Yersinia pestis bv. Antiqua (strain Antiqua).